The primary structure comprises 81 residues: Protein RALF-like 6 (81 aa).

The first 29 residues, 1–29 (MAAHKKSHIRIFFVSVMIILSLFSGFGEG), serve as a signal peptide directing secretion. Intrachain disulfides connect Cys-46/Cys-54 and Cys-66/Cys-72.

It belongs to the plant rapid alkalinization factor (RALF) family.

The protein localises to the secreted. In terms of biological role, cell signaling peptide that may regulate plant stress, growth, and development. Mediates a rapid alkalinization of extracellular space by mediating a transient increase in the cytoplasmic Ca(2+) concentration leading to a calcium-dependent signaling events through a cell surface receptor and a concomitant activation of some intracellular mitogen-activated protein kinases. In Arabidopsis thaliana (Mouse-ear cress), this protein is Protein RALF-like 6 (RALFL6).